Consider the following 877-residue polypeptide: SRP-independent targeting protein 1 (877 aa).

5 positions are modified to phosphoserine: Ser309, Ser310, Ser311, Ser332, and Ser334. 3 disordered regions span residues 369-414 (LRKQ…PSND), 446-521 (DDYT…DVLS), and 550-579 (KPFN…SNHF). Over residues 389 to 402 (RSQSYSSSNMSRSP) the composition is skewed to low complexity. The stretch at 412 to 441 (SNDELVYDELNNQINEVQDRAKNEEIVLYN) forms a coiled coil. The span at 447 to 462 (DYTKERGEQEQDRTSY) shows a compositional bias: basic and acidic residues. Acidic residues predominate over residues 470-501 (YDDEEGGNEDNYDDDEDDDDDDDDDDESDDEG). Polar residues-rich tracts occupy residues 510–521 (LSRSGSSTDVLS) and 551–579 (PFNQ…SNHF). Residues Lys668 and Lys670 each participate in a glycyl lysine isopeptide (Lys-Gly) (interchain with G-Cter in ubiquitin) cross-link. Phosphoserine is present on residues Ser692, Ser694, and Ser706. The tract at residues 773–815 (SLPKEREDDNDSTNSTIVPNHPDNDNYNDNDNDNNTGINSNNF) is disordered. Residues 805 to 815 (DNNTGINSNNF) are compositionally biased toward low complexity. Ser841 carries the post-translational modification Phosphoserine.

Interacts with ENV10/SND2.

It is found in the cytoplasm. Its function is as follows. Functions in the SND pathway, a SRP (signal recognition particle) and GET (guided entry of tail-anchored proteins) independent pathway for targeting a broad range of substrate proteins to the endoplasmic reticulum. SND functions in parallel to GET in targeting proteins with downstream hydrophobic motifs. This is SRP-independent targeting protein 1 from Saccharomyces cerevisiae (strain ATCC 204508 / S288c) (Baker's yeast).